Reading from the N-terminus, the 57-residue chain is Dendroaspis polylepis MT9 (57 aa).

Cystine bridges form between Cys3/Cys22, Cys17/Cys36, Cys38/Cys49, and Cys50/Cys55.

The protein belongs to the three-finger toxin family. Short-chain subfamily. In terms of tissue distribution, expressed by the venom gland.

The protein resides in the secreted. In terms of biological role, when tested on muscarinic GPCR, specifically antagonizes the type 2 receptor (CHRM2) subtype (Ki/Kd=120-399 nM). Ex vivo, it reverses the M2R-agonist-induced relaxation in rat and human arteries. This chain is Dendroaspis polylepis MT9, found in Dendroaspis polylepis polylepis (Black mamba).